A 473-amino-acid polypeptide reads, in one-letter code: Photosystem II CP43 reaction center protein (473 aa).

A propeptide spanning residues 1-14 (MKILYSLRRFYHVE) is cleaved from the precursor. An N-acetylthreonine modification is found at Thr15. Thr15 is modified (phosphothreonine). Helical transmembrane passes span 69–93 (LFEVAHFVPEKPMYEQGLILLPHLA), 134–155 (LLGPETLEESFPFFGYVWKDRN), 178–200 (KALYFGGVYDTWAPGGGDVRKIT), 255–275 (KPFAWARRAFVWSGEAYLSYS), and 291–312 (WFNNTAYPSEFYGPTGPEASQA). Glu367 is a [CaMn4O5] cluster binding site. The helical transmembrane segment at 447-471 (RARAAAAGFEKGIDRDLEPVLYMNP) threads the bilayer.

Belongs to the PsbB/PsbC family. PsbC subfamily. In terms of assembly, PSII is composed of 1 copy each of membrane proteins PsbA, PsbB, PsbC, PsbD, PsbE, PsbF, PsbH, PsbI, PsbJ, PsbK, PsbL, PsbM, PsbT, PsbX, PsbY, PsbZ, Psb30/Ycf12, at least 3 peripheral proteins of the oxygen-evolving complex and a large number of cofactors. It forms dimeric complexes. The cofactor is Binds multiple chlorophylls and provides some of the ligands for the Ca-4Mn-5O cluster of the oxygen-evolving complex. It may also provide a ligand for a Cl- that is required for oxygen evolution. PSII binds additional chlorophylls, carotenoids and specific lipids..

The protein localises to the plastid. It is found in the chloroplast thylakoid membrane. One of the components of the core complex of photosystem II (PSII). It binds chlorophyll and helps catalyze the primary light-induced photochemical processes of PSII. PSII is a light-driven water:plastoquinone oxidoreductase, using light energy to abstract electrons from H(2)O, generating O(2) and a proton gradient subsequently used for ATP formation. The sequence is that of Photosystem II CP43 reaction center protein from Lolium perenne (Perennial ryegrass).